Here is a 541-residue protein sequence, read N- to C-terminus: uncharacterized protein (541 aa).

The next 5 helical transmembrane spans lie at 10-32, 39-57, 62-84, 91-113, and 146-168; these read LNNQ…KINI, SSAI…YTLP, TLGL…FFSL, LSLG…TYLF, and APAA…IQII. RCK C-terminal domains lie at 183–260 and 268–352; these read LNKE…DDLE and TPVD…IFGN. 6 consecutive transmembrane segments (helical) span residues 357 to 375, 385 to 407, 428 to 447, 452 to 474, 481 to 500, and 515 to 537; these read SYNF…GFIL, SGIF…SNIY, GLVL…ILAT, GLQL…VFIC, PFLS…PGLA, and YATV…IFIV.

Belongs to the AAE transporter (TC 2.A.81) family.

Its subcellular location is the cell membrane. This is an uncharacterized protein from Desulfotalea psychrophila (strain LSv54 / DSM 12343).